The following is a 1690-amino-acid chain: Collagen alpha-4(IV) chain (1690 aa).

The N-terminal stretch at 1 to 38 (MWSLHIVLMRCSFRLTKSLATGPWSLILILFSVQYVYG) is a signal peptide. The segment at 39–64 (SGKKYIGPCGGRDCSVCHCVPEKGSR) is 7S domain. 2 disordered regions span residues 61-173 (KGSR…GEKG) and 187-258 (GDRG…GPTL). The triple-helical region stretch occupies residues 65–1459 (GPPGPPGPQG…IGDPGPKGFG (1395 aa)). Positions 66-75 (PPGPPGPQGP) are enriched in pro residues. Low complexity predominate over residues 76–88 (IGPLGAPGPIGLS). Residues 94–96 (RGD) carry the Cell attachment site motif. N142 carries N-linked (GlcNAc...) asparagine glycosylation. A Cell attachment site motif is present at residues 145-147 (RGD). The span at 149 to 164 (GFPGGRGALGPGGPLG) shows a compositional bias: gly residues. The Cell attachment site signature appears at 189–191 (RGD). The span at 199–208 (GSWGAGGPAG) shows a compositional bias: gly residues. Residues 310-312 (RGD) carry the Cell attachment site motif. Disordered stretches follow at residues 369–390 (PGDPGFPGRYGETGDVGPPGPP), 405–451 (GPPG…GLQG), and 469–1457 (GIKG…GPKG). Residues 412 to 434 (FPGLPGLPGEAGIPGRPDSAPGK) are compositionally biased toward low complexity. Composition is skewed to pro residues over residues 498 to 507 (PMGPPGPPGL) and 529 to 540 (PGPPGAEGPPGL). A compositionally biased stretch (basic and acidic residues) spans 586–607 (HGRDGHAGEKGDPGPPGDHEDA). Positions 644–655 (PGVPGHPGVRGP) are enriched in low complexity. N-linked (GlcNAc...) asparagine glycosylation is present at N669. Over residues 681–690 (FDGPPGPKGF) the composition is skewed to pro residues. Short sequence motifs (cell attachment site) lie at residues 724–726 (RGD) and 785–787 (RGD). The span at 849 to 858 (GAPGGKGQPG) shows a compositional bias: gly residues. 2 stretches are compositionally biased toward low complexity: residues 866–880 (AGMKGLPGLPGRPGA) and 907–917 (PRGLPGFPGFP). Positions 989–991 (RGD) match the Cell attachment site motif. Residues 1023–1032 (PGPPGPPGPP) are compositionally biased toward pro residues. The span at 1108–1117 (PGIQGPRGSP) shows a compositional bias: low complexity. Positions 1119-1131 (RPGPPGSSGPPGC) are enriched in pro residues. The short motif at 1212-1214 (RGD) is the Cell attachment site element. Composition is skewed to pro residues over residues 1220 to 1243 (ISPPGPRGKKGPPGPPGSSGPPGP), 1256 to 1280 (DPGPPGDQGPPGPDGPRGAPGPPGL), 1297 to 1309 (PGPPGPPGPPGPP), 1338 to 1353 (FPGPPGEKGLPGPPGR), and 1443 to 1452 (GPGPPGPIGD). One can recognise a Collagen IV NC1 domain in the interval 1465-1690 (GFLLVLHSQT…SRCQVCVKYS (226 aa)). Intrachain disulfides connect C1480–C1569, C1513–C1566, C1525–C1531, C1588–C1686, C1622–C1683, and C1634–C1641.

This sequence belongs to the type IV collagen family. In terms of assembly, there are six type IV collagen isoforms, alpha 1(IV)-alpha 6(IV), each of which can form a triple helix structure with 2 other chains to generate type IV collagen network. The alpha 3(IV) chain forms a triple helical protomer with alpha 4(IV) and alpha 5(IV); this triple helical structure dimerizes through NC1-NC1 domain interactions such that the alpha 3(IV), alpha 4(IV) and alpha 5(IV) chains of one protomer connect with the alpha 5(IV), alpha 4(IV) and alpha 3(IV) chains of the opposite protomer, respectively. Associates with LAMB2 at the neuromuscular junction and in GBM. Prolines at the third position of the tripeptide repeating unit (G-X-Y) are hydroxylated in some or all of the chains. Post-translationally, type IV collagens contain numerous cysteine residues which are involved in inter- and intramolecular disulfide bonding. 12 of these, located in the NC1 domain, are conserved in all known type IV collagens. In terms of processing, the trimeric structure of the NC1 domains is stabilized by covalent bonds between Lys and Met residues. As to expression, expressed in Bruch's membrane, outer plexiform layer, inner nuclear layer, inner plexiform layer, ganglion cell layer, inner limiting membrane and around the blood vessels of the retina (at protein level). Alpha 3 and alpha 4 type IV collagens are colocalized and present in kidney, eye, basement membranes of lens capsule, cochlea, lung, skeletal muscle, aorta, synaptic fibers, fetal kidney and fetal lung. PubMed:8083201 reports similar levels of expression of alpha 3 and alpha 4 type IV collagens in kidney, but PubMed:7523402 reports that in kidney levels of alpha 3 type IV collagen are significantly lower than those of alpha 4 type IV collagen. Highest levels of expression of alpha 4 type IV collagen are detected in kidney, calvaria, neuroretina and cardiac muscle. Lower levels of expression are observed in brain, lung and thymus, and no expression is detected in choroid plexus, liver, adrenal, pancreas, ileum or skin.

Its subcellular location is the secreted. It localises to the extracellular space. The protein localises to the extracellular matrix. It is found in the basement membrane. Its function is as follows. Type IV collagen is the major structural component of glomerular basement membranes (GBM), forming a 'chicken-wire' meshwork together with laminins, proteoglycans and entactin/nidogen. The chain is Collagen alpha-4(IV) chain (COL4A4) from Homo sapiens (Human).